The following is a 498-amino-acid chain: ATP synthase subunit beta, chloroplastic (498 aa).

The residue at position 6 (threonine 6) is a Phosphothreonine. A Phosphoserine modification is found at serine 13. Residue 172–179 (GGAGVGKT) coordinates ATP.

The protein belongs to the ATPase alpha/beta chains family. F-type ATPases have 2 components, CF(1) - the catalytic core - and CF(0) - the membrane proton channel. CF(1) has five subunits: alpha(3), beta(3), gamma(1), delta(1), epsilon(1). CF(0) has four main subunits: a(1), b(1), b'(1) and c(9-12).

It localises to the plastid. Its subcellular location is the chloroplast thylakoid membrane. It carries out the reaction ATP + H2O + 4 H(+)(in) = ADP + phosphate + 5 H(+)(out). Its function is as follows. Produces ATP from ADP in the presence of a proton gradient across the membrane. The catalytic sites are hosted primarily by the beta subunits. The protein is ATP synthase subunit beta, chloroplastic of Raphanus sativus (Radish).